The chain runs to 86 residues: Polcalcin Che a 3 (86 aa).

2 consecutive EF-hand domains span residues 8 to 43 (QDIA…LGSV) and 43 to 78 (VTPD…NRGL). Ca(2+)-binding residues include Asp-21, Asn-23, Asp-25, Lys-27, Glu-32, Asp-56, Asp-58, Asp-60, and Glu-67.

This Chenopodium album (Fat hen) protein is Polcalcin Che a 3.